The primary structure comprises 195 residues: Thymidine kinase (195 aa).

Residues 15–22 (GSMFSGKS) and 88–91 (DEVQ) contribute to the ATP site. E89 serves as the catalytic Proton acceptor. Zn(2+)-binding residues include C145, C148, C183, and C186.

Belongs to the thymidine kinase family. In terms of assembly, homotetramer.

It localises to the cytoplasm. The enzyme catalyses thymidine + ATP = dTMP + ADP + H(+). The chain is Thymidine kinase from Bacillus cereus (strain 03BB102).